Reading from the N-terminus, the 212-residue chain is MGRGKIEIKRIENSSNRQVTYSKRRNGIIKKAKEITVLCDAKVSLIIFGNSGKMHEYCSPSTTLPDMLDGYQKTSGRRLWDAKHENLSNEIDRIKKENDNMQVKLRHLKGEDINSLNHKELMVLEEGLTNGLSSISAKQSEILRMVRKNDQILEEEHKQLQYALHQKEMAAMGGNMRMIEEVYHQRDRDYEYQQMPFALRVQPMQPNLHERM.

Residues 3–58 (RGKIEIKRIENSSNRQVTYSKRRNGIIKKAKEITVLCDAKVSLIIFGNSGKMHEYC) form the MADS-box domain. In terms of domain architecture, K-box spans 84-170 (HENLSNEIDR…QYALHQKEMA (87 aa)).

As to expression, predominantly expressed in petals and stamens, less in carpels and sepals.

It localises to the nucleus. In terms of biological role, transcription factor involved in the genetic control of flower development. The polypeptide is Floral homeotic protein PMADS 2 (PMADS2) (Petunia hybrida (Petunia)).